The following is a 483-amino-acid chain: MHTPLEQQEIRYRKGDIIELTITDHAEKDKCFGKTTEGMGVMVSGILAPGDRVSAQIYKVKSRYLEARAIEVLEASPDRVEPVCPVFGSCGGCKWMHVSYEAQLRYKHKKVTDSLEHIGGFESPDVRPVLAAPDALHYRNKVEFSCSNMRYLLQSEIDSDQLAKPKTFALGFHAPGNFEKVLDLDTCYLAKECMNRVLNVLRDFAIERGLEPYAAKAHEGYLRNLMLRYSERHEQLMVNIVTSWYDKALMQALKERLEAAMPEQQMTLLNNVTTRKNTVATGEQEYVISGDGYVTERLGDLDFRISANSFFQTNTRQAETLYDQIIAVGGITPEDTVYDLYCGTGTITLYLARHCKQAIGIEVVESAVKDAEMNAELNGLSNTVFFQADLKNFHAMQEALEPYAKPRIIVTDPPRAGMHPKALDTMLKLQPERIVYVSCNPDNLARDGKEIAARGYRMTSAQPVDMFPQTNHIETVACFERAE.

The region spanning 11 to 71 is the TRAM domain; the sequence is RYRKGDIIEL…SRYLEARAIE (61 aa). Cys84, Cys90, Cys93, and Cys187 together coordinate [4Fe-4S] cluster. Gln312, Tyr341, Glu362, and Asp412 together coordinate S-adenosyl-L-methionine. The active-site Nucleophile is the Cys439.

The protein belongs to the class I-like SAM-binding methyltransferase superfamily. RNA M5U methyltransferase family.

This is an uncharacterized protein from Chlorobaculum tepidum (strain ATCC 49652 / DSM 12025 / NBRC 103806 / TLS) (Chlorobium tepidum).